The primary structure comprises 100 residues: uncharacterized protein (100 aa).

This sequence to M.jannaschii MJ1155.1.

This is an uncharacterized protein from Archaeoglobus fulgidus (strain ATCC 49558 / DSM 4304 / JCM 9628 / NBRC 100126 / VC-16).